Here is a 548-residue protein sequence, read N- to C-terminus: Chaperonin GroEL (548 aa).

ATP-binding positions include 30-33, Lys-51, 87-91, Gly-415, and 479-481; these read TLGP, DGTTT, and NAV.

This sequence belongs to the chaperonin (HSP60) family. As to quaternary structure, forms a cylinder of 14 subunits composed of two heptameric rings stacked back-to-back. Interacts with the co-chaperonin GroES.

The protein resides in the cytoplasm. The enzyme catalyses ATP + H2O + a folded polypeptide = ADP + phosphate + an unfolded polypeptide.. In terms of biological role, together with its co-chaperonin GroES, plays an essential role in assisting protein folding. The GroEL-GroES system forms a nano-cage that allows encapsulation of the non-native substrate proteins and provides a physical environment optimized to promote and accelerate protein folding. The sequence is that of Chaperonin GroEL from Stenotrophomonas maltophilia (Pseudomonas maltophilia).